The chain runs to 150 residues: uncharacterized protein (150 aa).

This is an uncharacterized protein from Mycoplasma genitalium (strain ATCC 33530 / DSM 19775 / NCTC 10195 / G37) (Mycoplasmoides genitalium).